Consider the following 342-residue polypeptide: Dihydroorotase (342 aa).

His13 and His15 together coordinate Zn(2+). Residues 15–17 (HLR) and Asn41 each bind substrate. Lys97, His134, and His172 together coordinate Zn(2+). Lys97 bears the N6-carboxylysine mark. A substrate-binding site is contributed by His134. Leu217 contacts substrate. Asp245 contacts Zn(2+). Residue Asp245 is part of the active site. Residues His249 and Ala261 each contribute to the substrate site.

The protein belongs to the metallo-dependent hydrolases superfamily. DHOase family. Class II DHOase subfamily. Homodimer. The cofactor is Zn(2+).

It catalyses the reaction (S)-dihydroorotate + H2O = N-carbamoyl-L-aspartate + H(+). It participates in pyrimidine metabolism; UMP biosynthesis via de novo pathway; (S)-dihydroorotate from bicarbonate: step 3/3. Functionally, catalyzes the reversible cyclization of carbamoyl aspartate to dihydroorotate. This is Dihydroorotase from Shewanella loihica (strain ATCC BAA-1088 / PV-4).